The chain runs to 265 residues: Serine protease ami (265 aa).

The first 21 residues, Met-1–Cys-21, serve as a signal peptide directing secretion. N-linked (GlcNAc...) asparagine glycosylation is present at Asn-2. Positions Arg-22 to Arg-26 are cleaved as a propeptide — activation peptide. In terms of domain architecture, Peptidase S1 spans Ile-27–Tyr-254. Cys-52 and Cys-68 are joined by a disulfide. His-67 functions as the Charge relay system in the catalytic mechanism. N-linked (GlcNAc...) asparagine glycosylation is found at Asn-71, Asn-74, and Asn-108. Asp-115 serves as the catalytic Charge relay system. Intrachain disulfides connect Cys-149–Cys-215, Cys-180–Cys-196, and Cys-205–Cys-230. Catalysis depends on Ser-209, which acts as the Charge relay system. Asn-255 carries an N-linked (GlcNAc...) asparagine glycan.

The protein belongs to the peptidase S1 family.

It localises to the secreted. Its function is as follows. Probable serine protease. In Xenopus tropicalis (Western clawed frog), this protein is Serine protease ami.